The chain runs to 460 residues: Serine incorporator 5 (460 aa).

Residues 1 to 36 (MCTPCCVSQLACCCGSAACSLCCGCCPKIKQSTSTR) lie on the Extracellular side of the membrane. A helical membrane pass occupies residues 37 to 57 (FMYALFFMLVTVTCVIMMSPT). At 58–89 (VEMAMREHIPFYSQMCQQLNAGENCSTLVGYS) the chain is on the cytoplasmic side. The chain crosses the membrane as a helical span at residues 90–110 (AVYKVCFGMACFFFFFAVFTI). Topologically, residues 111-124 (RVQNSTGCRAAVHN) are extracellular. A glycan (N-linked (GlcNAc...) asparagine) is linked at Asn-114. The chain crosses the membrane as a helical span at residues 125–145 (GFWFFKFVALLACCAGGFFLP). The Cytoplasmic portion of the chain corresponds to 146–156 (NQDQFLEVWRY). A helical membrane pass occupies residues 157–177 (VGAAGGFLFIIIQLMLLVQFA). Residues 178 to 197 (HRWNQNWSSGATYNKLWYAA) lie on the Extracellular side of the membrane. Asn-183 carries N-linked (GlcNAc...) asparagine glycosylation. The helical transmembrane segment at 198–218 (LALVTLVLFSVAVGGMVFMFM) threads the bilayer. Residues 219 to 230 (YYTHPEACFLNK) lie on the Cytoplasmic side of the membrane. A helical membrane pass occupies residues 231–251 (IFLGVNGGLCFIVSLLAISPC). The Extracellular segment spans residues 252-259 (IQTFQPTS). Residues 260–280 (GLLQPAVITLYVMYLTFSALA) form a helical membrane-spanning segment. Topologically, residues 281-311 (SKPIEMVEDEIKGNITVCVFPFKSGLKSDTN) are cytoplasmic. Residues 312 to 332 (IVTGVGTAILFCCILYSCLIS) form a helical membrane-spanning segment. Residues 333 to 391 (TTKRSSAALQVYRNDMPENERARCCFCWVDDTEDYDDEKTSGGQNVKYDERDGTVYSYC) lie on the Extracellular side of the membrane. A helical membrane pass occupies residues 392–412 (FFHFVFFLGSLYVMMTVTNWF). Over 413-433 (HYDNAKIERLLEGSWSVFWIK) the chain is Cytoplasmic. A helical membrane pass occupies residues 434–454 (MASSWVCLFFYMWTLVVPMLF). Topologically, residues 455 to 460 (PQRFQA) are extracellular.

It belongs to the TDE1 family.

The protein resides in the cell membrane. The enzyme catalyses a 1,2-diacyl-sn-glycero-3-phospho-L-serine(in) = a 1,2-diacyl-sn-glycero-3-phospho-L-serine(out). The catalysed reaction is a 1,2-diacyl-sn-glycero-3-phosphocholine(in) = a 1,2-diacyl-sn-glycero-3-phosphocholine(out). It carries out the reaction a 1,2-diacyl-sn-glycero-3-phosphoethanolamine(in) = a 1,2-diacyl-sn-glycero-3-phosphoethanolamine(out). Its function is as follows. Restriction factor required to restrict infectivity of gammaretroviruses: acts by inhibiting an early step of viral infection. Impairs the penetration of the viral particle into the cytoplasm. Non-ATP-dependent, non-specific lipid transporter for phosphatidylserine, phosphatidylcholine, and phosphatidylethanolamine. Functions as a scramblase that flips lipids in both directions across the membrane. Phospholipid scrambling results in gammaretroviral surface exposure of phosphatidylserine and loss of membrane asymmetry, which leads to loss of infectivity. Enhances the incorporation of serine into phosphatidylserine and sphingolipids. This chain is Serine incorporator 5 (serinc5), found in Danio rerio (Zebrafish).